A 208-amino-acid polypeptide reads, in one-letter code: Urease accessory protein UreE (208 aa).

The tract at residues 145–195 (AEAHGHGQAHAHDHHDHDHHDHGHDHAHHDHAHHDHAHDHHGHDHAHDHAH) is disordered.

Belongs to the UreE family.

It localises to the cytoplasm. Involved in urease metallocenter assembly. Binds nickel. Probably functions as a nickel donor during metallocenter assembly. The sequence is that of Urease accessory protein UreE from Azorhizobium caulinodans (strain ATCC 43989 / DSM 5975 / JCM 20966 / LMG 6465 / NBRC 14845 / NCIMB 13405 / ORS 571).